We begin with the raw amino-acid sequence, 458 residues long: D-inositol 3-phosphate glycosyltransferase (458 aa).

A disordered region spans residues 1-29 (MRADRPGHRSRGINPGPGMFTLVGPDERD). Position 47 (His47) interacts with 1D-myo-inositol 3-phosphate. UDP-N-acetyl-alpha-D-glucosamine contacts are provided by residues 53–54 (QP) and Gly61. 1D-myo-inositol 3-phosphate is bound by residues 58 to 63 (DAGGMN), Lys116, Tyr149, Thr173, and Arg193. UDP-N-acetyl-alpha-D-glucosamine contacts are provided by Arg267, Lys272, and Val339. Ala351 is a Mg(2+) binding site. Residues Glu361 and Glu369 each contribute to the UDP-N-acetyl-alpha-D-glucosamine site. Residue Thr375 participates in Mg(2+) binding.

This sequence belongs to the glycosyltransferase group 1 family. MshA subfamily. Homodimer.

The enzyme catalyses 1D-myo-inositol 3-phosphate + UDP-N-acetyl-alpha-D-glucosamine = 1D-myo-inositol 2-acetamido-2-deoxy-alpha-D-glucopyranoside 3-phosphate + UDP + H(+). Catalyzes the transfer of a N-acetyl-glucosamine moiety to 1D-myo-inositol 3-phosphate to produce 1D-myo-inositol 2-acetamido-2-deoxy-glucopyranoside 3-phosphate in the mycothiol biosynthesis pathway. The sequence is that of D-inositol 3-phosphate glycosyltransferase from Nocardioides sp. (strain ATCC BAA-499 / JS614).